A 212-amino-acid polypeptide reads, in one-letter code: MKNLERLFAEKLLKIKAIKLQPANPFTWASGWKSPFYCDNRKTLSYPSLRSFVKFEITRLVLERFGQVDAIAGVATGAIPQGALVADALNLPFVYVRSTPKDHGLENLIEGELRPGMKVVVVEDLISTGGSSLKAVEAIRRDGCEVIGMVAAYTYGFPVAEQAFKDAKVPLVTLTNYEAVLDVALRTGYIEEEDIATLNEWRKDPAHWETGK.

5-phospho-alpha-D-ribose 1-diphosphate-binding positions include Arg-97, Lys-101, His-103, and 123–131 (EDLISTGGS). Orotate is bound at residue Ser-127.

This sequence belongs to the purine/pyrimidine phosphoribosyltransferase family. PyrE subfamily. Homodimer. It depends on Mg(2+) as a cofactor.

It catalyses the reaction orotidine 5'-phosphate + diphosphate = orotate + 5-phospho-alpha-D-ribose 1-diphosphate. It participates in pyrimidine metabolism; UMP biosynthesis via de novo pathway; UMP from orotate: step 1/2. Catalyzes the transfer of a ribosyl phosphate group from 5-phosphoribose 1-diphosphate to orotate, leading to the formation of orotidine monophosphate (OMP). This Bacteroides fragilis (strain ATCC 25285 / DSM 2151 / CCUG 4856 / JCM 11019 / LMG 10263 / NCTC 9343 / Onslow / VPI 2553 / EN-2) protein is Orotate phosphoribosyltransferase.